The primary structure comprises 170 residues: MANRNDSKNRRNKDDIEDQLVAINRITKVVKGGRRQRFAALVVVGDKKGHVGFGTGKATEVPEAIRKAVEAGKKNMISVPTVGTTIPHEVLGHYGSGNVLLKPAEAGSGIAAGGAVRIVMDMAGIGDVTSKSLGSNTPINVIRATIDGLQKLKTREDVLKLRESAKSLQD.

Residues 16-79 (IEDQLVAINR…EAGKKNMISV (64 aa)) form the S5 DRBM domain.

This sequence belongs to the universal ribosomal protein uS5 family. In terms of assembly, part of the 30S ribosomal subunit. Contacts proteins S4 and S8.

In terms of biological role, with S4 and S12 plays an important role in translational accuracy. Its function is as follows. Located at the back of the 30S subunit body where it stabilizes the conformation of the head with respect to the body. The polypeptide is Small ribosomal subunit protein uS5 (Lactobacillus delbrueckii subsp. bulgaricus (strain ATCC 11842 / DSM 20081 / BCRC 10696 / JCM 1002 / NBRC 13953 / NCIMB 11778 / NCTC 12712 / WDCM 00102 / Lb 14)).